A 154-amino-acid polypeptide reads, in one-letter code: Endoribonuclease YbeY (154 aa).

His120, His124, and His130 together coordinate Zn(2+).

The protein belongs to the endoribonuclease YbeY family. Requires Zn(2+) as cofactor.

It localises to the cytoplasm. Functionally, single strand-specific metallo-endoribonuclease involved in late-stage 70S ribosome quality control and in maturation of the 3' terminus of the 16S rRNA. This chain is Endoribonuclease YbeY, found in Oceanobacillus iheyensis (strain DSM 14371 / CIP 107618 / JCM 11309 / KCTC 3954 / HTE831).